A 542-amino-acid chain; its full sequence is Trans-alpha-bergamotene synthase (542 aa).

Positions 295, 299, 439, 443, and 447 each coordinate Mg(2+). The DDXXD motif motif lies at 295 to 299 (DDFYD).

This sequence belongs to the terpene synthase family. The cofactor is Mg(2+).

It carries out the reaction (2E,6E)-farnesyl diphosphate = (1S,5S,6R)-alpha-bergamotene + diphosphate. The protein operates within secondary metabolite biosynthesis; terpenoid biosynthesis. In terms of biological role, sesquiterpene synthase converting farnesyl diphosphate to trans-alpha-bergamotene as the major product. This chain is Trans-alpha-bergamotene synthase, found in Phyla dulcis (Aztec sweet herb).